A 198-amino-acid polypeptide reads, in one-letter code: Dephospho-CoA kinase (198 aa).

In terms of domain architecture, DPCK spans 3–198 (LIGLTGGIAS…VDALWAGLRG (196 aa)). Position 11–16 (11–16 (ASGKST)) interacts with ATP.

Belongs to the CoaE family.

It localises to the cytoplasm. It catalyses the reaction 3'-dephospho-CoA + ATP = ADP + CoA + H(+). It participates in cofactor biosynthesis; coenzyme A biosynthesis; CoA from (R)-pantothenate: step 5/5. In terms of biological role, catalyzes the phosphorylation of the 3'-hydroxyl group of dephosphocoenzyme A to form coenzyme A. The protein is Dephospho-CoA kinase of Leifsonia xyli subsp. xyli (strain CTCB07).